The chain runs to 150 residues: 3-dehydroquinate dehydratase (150 aa).

Tyrosine 23 (proton acceptor) is an active-site residue. Substrate contacts are provided by asparagine 75, histidine 81, and aspartate 88. Histidine 101 serves as the catalytic Proton donor. Residues 102-103 (LS) and arginine 112 each bind substrate.

Belongs to the type-II 3-dehydroquinase family. As to quaternary structure, homododecamer.

The catalysed reaction is 3-dehydroquinate = 3-dehydroshikimate + H2O. The protein operates within metabolic intermediate biosynthesis; chorismate biosynthesis; chorismate from D-erythrose 4-phosphate and phosphoenolpyruvate: step 3/7. Catalyzes a trans-dehydration via an enolate intermediate. This is 3-dehydroquinate dehydratase from Pseudomonas savastanoi pv. phaseolicola (strain 1448A / Race 6) (Pseudomonas syringae pv. phaseolicola (strain 1448A / Race 6)).